The chain runs to 171 residues: Endoribonuclease YbeY (171 aa).

Zn(2+)-binding residues include His126, His130, and His136.

It belongs to the endoribonuclease YbeY family. Zn(2+) serves as cofactor.

The protein localises to the cytoplasm. In terms of biological role, single strand-specific metallo-endoribonuclease involved in late-stage 70S ribosome quality control and in maturation of the 3' terminus of the 16S rRNA. This chain is Endoribonuclease YbeY, found in Rhizobium etli (strain ATCC 51251 / DSM 11541 / JCM 21823 / NBRC 15573 / CFN 42).